Here is a 302-residue protein sequence, read N- to C-terminus: HTH-type transcriptional regulator AbgR (302 aa).

The HTH lysR-type domain maps to 5–62; that stretch reads VKIHQIRAFVEVARQGSIRGASRMLNMSQPALSKSIQELEEGLAAQLFFRRSKGVTLT. The segment at residues 22-41 is a DNA-binding region (H-T-H motif); the sequence is IRGASRMLNMSQPALSKSIQ.

Belongs to the LysR transcriptional regulatory family.

In terms of biological role, could be the regulator of the abg operon. The chain is HTH-type transcriptional regulator AbgR (abgR) from Escherichia coli (strain K12).